Here is a 545-residue protein sequence, read N- to C-terminus: MSKYIFVTGGVVSSLGKGAAGAALGALLEARGLKVTMLKLDPYINVDPGTMSPFQHGEVFVTADGAETDLDLGHYERFLSTRMGKRNNFTTGLVYQTVIEKERRGDYLGRTVQVIPHVTDEIKRRIRLGAADADVALVEIGGTVGDIESQPFLEAIRQMAVEEERGDTLFMHLTLVPYLASAGEMKTKPTQHSVRELRAIGIQPDVLLCRADRPIPADHRAKIGLFSNLPEKAVISAIDTDSIYRIPLLFHAQGLDDLVVQNLGLHLSAPDLSVWNGIINALEHPEGEVVIALVGKYVGLTESYKSLAEALLHAGLRARRSVRFLYVDAEDVETQGTEILAEADAILVPGGFGGRGTEGKIASIRHARERKVPYLGICLGMQLAVVEFARHRAGLMNANSTELDPQTPAPVITLMTEWSDPEGHKAYREEGGNLGGTMRLGEQECRLEPDSLAIQAYGQERIHERHRHRFEFNNRYREPLAMAGLRYTGFSADSELVEVVELPDHPWFLGCQFHPEFTSNPREGHPLFDAFMRAAIAQRERDGSS.

The tract at residues Met-1–Leu-265 is amidoligase domain. Ser-13 is a CTP binding site. Position 13 (Ser-13) interacts with UTP. ATP is bound by residues Ser-14–Ala-19 and Asp-71. The Mg(2+) site is built by Asp-71 and Glu-139. Residues Asp-146–Glu-148, Lys-186–Gln-191, and Lys-222 each bind CTP. UTP-binding positions include Lys-186–Gln-191 and Lys-222. A Glutamine amidotransferase type-1 domain is found at Val-290 to Arg-541. Gly-351 serves as a coordination point for L-glutamine. The Nucleophile; for glutamine hydrolysis role is filled by Cys-378. L-glutamine contacts are provided by residues Leu-379–Gln-382, Glu-402, and Arg-469. Active-site residues include His-514 and Glu-516.

Belongs to the CTP synthase family. As to quaternary structure, homotetramer.

It catalyses the reaction UTP + L-glutamine + ATP + H2O = CTP + L-glutamate + ADP + phosphate + 2 H(+). It carries out the reaction L-glutamine + H2O = L-glutamate + NH4(+). The enzyme catalyses UTP + NH4(+) + ATP = CTP + ADP + phosphate + 2 H(+). Its pathway is pyrimidine metabolism; CTP biosynthesis via de novo pathway; CTP from UDP: step 2/2. Its activity is regulated as follows. Allosterically activated by GTP, when glutamine is the substrate; GTP has no effect on the reaction when ammonia is the substrate. The allosteric effector GTP functions by stabilizing the protein conformation that binds the tetrahedral intermediate(s) formed during glutamine hydrolysis. Inhibited by the product CTP, via allosteric rather than competitive inhibition. Functionally, catalyzes the ATP-dependent amination of UTP to CTP with either L-glutamine or ammonia as the source of nitrogen. Regulates intracellular CTP levels through interactions with the four ribonucleotide triphosphates. The polypeptide is CTP synthase (Acidithiobacillus ferrooxidans (strain ATCC 23270 / DSM 14882 / CIP 104768 / NCIMB 8455) (Ferrobacillus ferrooxidans (strain ATCC 23270))).